A 214-amino-acid polypeptide reads, in one-letter code: Small ribosomal subunit protein eS6 (214 aa).

The protein belongs to the eukaryotic ribosomal protein eS6 family.

This Saccharolobus islandicus (strain L.S.2.15 / Lassen #1) (Sulfolobus islandicus) protein is Small ribosomal subunit protein eS6.